Consider the following 165-residue polypeptide: Type IV major pilin protein PilE1 (165 aa).

Positions Met-1–Gly-7 are cleaved as a propeptide — leader sequence. Residue Phe-8 is modified to N-methylphenylalanine. A helical transmembrane segment spans residues Phe-8–Leu-28. Ser-70 is a glycosylation site (O-linked (DADDGlc) serine). O-(2-aminoethylphosphoryl)serine; alternate is present on Ser-75. Residue Ser-75 is modified to O-(2-cholinephosphoryl)serine; alternate. At Ser-75 the chain carries Phosphoserine; alternate. Ser-101 bears the O-(sn-1-glycerophosphoryl)serine; partial mark. Cysteines 128 and 158 form a disulfide. The segment covering Asp-137–His-153 has biased composition (basic and acidic residues). The tract at residues Asp-137–Lys-165 is disordered.

Belongs to the N-Me-Phe pilin family. As to quaternary structure, the pili are polar flexible filaments of about 5.4 nanometers diameter and 2.5 micrometers average length; they consist of only a single polypeptide chain arranged in a helical configuration of five subunits per turn in the assembled pilus. The O-linked glycan identified as Gal-GlcNAc disaccharide in PubMed:7477282 and PubMed:10048019 is now identified as either a hexosyl-diacetamidotrideoxyhexoside (DATDHex) by mass spectrometry in PubMed:15249686, or alpha-D-galactopyranosyl-(1-&gt;3)-2,4-diacetamido-2,4-dideoxy-beta-D-glucopyranoside (DADDGlc) by X-ray diffraction in PubMed:16949362. It is not clear whether there is a chemical difference in the glycosylation of the two derivatives of strain MS11 used in these experiments, or not. Post-translationally, in some MS11 derivative strains, Ser-75 is modified to O-(2-aminoethylphosphoryl)serine, and in some other derivatives that can be secondarily modified to O-(2-cholinephosphoryl)serine by N-methylation.

It localises to the fimbrium. Its subcellular location is the membrane. In terms of biological role, major component of the type IV pilus (T4P) that plays a role in cellular adherence, microcolony formation, resistance to neutrophil mediated killing, twitching motility as well as transformation. Mediates the attachment and the formation of bacterial microcolonies on host epithelial cells. Mechanistically, pili retractation induces host NF-kappa-B activation in infected cells, which is temporally associated with the formation of gonococcal microcolonies. This chain is Type IV major pilin protein PilE1 (pilE1), found in Neisseria gonorrhoeae.